Consider the following 226-residue polypeptide: Ribonuclease HII (226 aa).

Residues 29–220 (GPVAGVDEAG…VVAAGVRLEQ (192 aa)) enclose the RNase H type-2 domain. 3 residues coordinate a divalent metal cation: aspartate 35, glutamate 36, and aspartate 129.

This sequence belongs to the RNase HII family. Mn(2+) is required as a cofactor. It depends on Mg(2+) as a cofactor.

It is found in the cytoplasm. It carries out the reaction Endonucleolytic cleavage to 5'-phosphomonoester.. Functionally, endonuclease that specifically degrades the RNA of RNA-DNA hybrids. The sequence is that of Ribonuclease HII from Rhodococcus erythropolis (strain PR4 / NBRC 100887).